A 235-amino-acid polypeptide reads, in one-letter code: Pyridoxine 5'-phosphate synthase (235 aa).

Asparagine 6 contacts 3-amino-2-oxopropyl phosphate. 1-deoxy-D-xylulose 5-phosphate is bound at residue 8 to 9 (DH). Arginine 17 contacts 3-amino-2-oxopropyl phosphate. Residue histidine 42 is the Proton acceptor of the active site. Residues arginine 44 and histidine 49 each contribute to the 1-deoxy-D-xylulose 5-phosphate site. The Proton acceptor role is filled by glutamate 69. Threonine 99 serves as a coordination point for 1-deoxy-D-xylulose 5-phosphate. Histidine 189 acts as the Proton donor in catalysis. 3-amino-2-oxopropyl phosphate is bound by residues glycine 190 and 211 to 212 (GH).

The protein belongs to the PNP synthase family. As to quaternary structure, homooctamer; tetramer of dimers.

It localises to the cytoplasm. It catalyses the reaction 3-amino-2-oxopropyl phosphate + 1-deoxy-D-xylulose 5-phosphate = pyridoxine 5'-phosphate + phosphate + 2 H2O + H(+). It participates in cofactor biosynthesis; pyridoxine 5'-phosphate biosynthesis; pyridoxine 5'-phosphate from D-erythrose 4-phosphate: step 5/5. Its function is as follows. Catalyzes the complicated ring closure reaction between the two acyclic compounds 1-deoxy-D-xylulose-5-phosphate (DXP) and 3-amino-2-oxopropyl phosphate (1-amino-acetone-3-phosphate or AAP) to form pyridoxine 5'-phosphate (PNP) and inorganic phosphate. The polypeptide is Pyridoxine 5'-phosphate synthase (Chlorobium phaeovibrioides (strain DSM 265 / 1930) (Prosthecochloris vibrioformis (strain DSM 265))).